Here is a 460-residue protein sequence, read N- to C-terminus: Solute carrier family 52, riboflavin transporter, member 3 (460 aa).

Residues 1 to 6 (MAFLTH) lie on the Cytoplasmic side of the membrane. Residues 7-27 (LLVCVFGMGSWVAINGLWVEL) traverse the membrane as a helical segment. The Extracellular portion of the chain corresponds to 28 to 37 (PLLVTELPEA). The chain crosses the membrane as a helical span at residues 38–58 (WYLPSYLTVVIQLANIGPLLV). Topologically, residues 59-71 (TLMHRFRPGCLSE) are cytoplasmic. Residues 72–92 (VPVIFLILCVGTAACILLAFL) traverse the membrane as a helical segment. Over 93–105 (WNVTSWIQGGQHS) the chain is Extracellular. Residue Asn-94 is glycosylated (N-linked (GlcNAc...) asparagine). Residues 106–126 (VAFIVLTFFLALVDCTSSVTF) traverse the membrane as a helical segment. The Cytoplasmic segment spans residues 127–137 (LPFMSQLPTYY). The chain crosses the membrane as a helical span at residues 138–158 (LTTFFIGEGLSGLLPALVALV). Over 159-211 (QGSGITTCVNVTETPGTTLNTMETPITQGNLSPSLPSPSWHQESRYLAPRFSP) the chain is Extracellular. N-linked (GlcNAc...) asparagine glycosylation is present at Asn-168. A helical transmembrane segment spans residues 212 to 232 (LLFFLLLSFLTGCCLVAFFLL). Topologically, residues 233–291 (QRQPWGRQGSIEDLLHSQVTLHSIRPRDTEDTSSLGAPVSSPGKGSVEASVASLRPAQL) are cytoplasmic. 2 positions are modified to phosphoserine: Ser-242 and Ser-266. Residues 292–312 (AFIYSVVAFVNALTNGVLPSV) traverse the membrane as a helical segment. Residues 313 to 326 (QTYSCLPYGPVAYH) are Extracellular-facing. A helical transmembrane segment spans residues 327 to 347 (LSATLSSVASPLACFLPIFLP). Residues 348-350 (NRS) lie on the Cytoplasmic side of the membrane. The chain crosses the membrane as a helical span at residues 351–371 (LLFLGVLTVLGTGFGAYNMAM). At 372 to 387 (AAMSPCPVLQGHWGGE) the chain is on the extracellular side. An intrachain disulfide couples Cys-377 to Cys-454. Residues 388 to 408 (VLIVLSWVLFAACLSYVKVML) traverse the membrane as a helical segment. Topologically, residues 409–418 (GVILRDRSRS) are cytoplasmic. Residues 419–439 (ALLWCGAAVQLGSLIGALLMF) traverse the membrane as a helical segment. Residues 440–460 (PLVNVLKLFSSADYCSLDCSV) lie on the Extracellular side of the membrane.

Belongs to the riboflavin transporter family. In terms of tissue distribution, within the small intestine, it is particularly expressed in the jujenum and the ileum. Almost negligible expression in the stomach, duodenum, and large intestine.

The protein resides in the cell membrane. The catalysed reaction is riboflavin(in) = riboflavin(out). Plasma membrane transporter mediating the uptake by cells of the water soluble vitamin B2/riboflavin that plays a key role in biochemical oxidation-reduction reactions of the carbohydrate, lipid, and amino acid metabolism. The polypeptide is Solute carrier family 52, riboflavin transporter, member 3 (Slc52a3) (Mus musculus (Mouse)).